Here is a 136-residue protein sequence, read N- to C-terminus: MLQPKRTKFRKMHKGRNRGLAQGTDVSFGSFGLKAVGRGRLTARQIEAARRAMTRAVKRQGKIWIRVFPDKPITEKPLAVRMGKGKGNVEYWVALIQPGKVLYEMGGVPEELAREAFKLAAAKLPIKTTFVTKTVM.

This sequence belongs to the universal ribosomal protein uL16 family. Part of the 50S ribosomal subunit.

Binds 23S rRNA and is also seen to make contacts with the A and possibly P site tRNAs. The polypeptide is Large ribosomal subunit protein uL16 (Shigella flexneri).